Reading from the N-terminus, the 22-residue chain is Phospholipase A2 (22 aa).

It belongs to the phospholipase A2 family. Group II subfamily. Requires Ca(2+) as cofactor. Seven disulfide bonds are present. In terms of tissue distribution, expressed by the venom gland.

It localises to the secreted. It carries out the reaction a 1,2-diacyl-sn-glycero-3-phosphocholine + H2O = a 1-acyl-sn-glycero-3-phosphocholine + a fatty acid + H(+). Its function is as follows. Snake venom phospholipase A2 (PLA2) that inhibits neuromuscular transmission by blocking acetylcholine release from the nerve termini. PLA2 catalyzes the calcium-dependent hydrolysis of the 2-acyl groups in 3-sn-phosphoglycerides. This is Phospholipase A2 from Daboia siamensis (Eastern Russel's viper).